Reading from the N-terminus, the 445-residue chain is tRNA-2-methylthio-N(6)-dimethylallyladenosine synthase (445 aa).

The MTTase N-terminal domain occupies 4-121; that stretch reads NKIYIKTWGC…LPNMIQEVKK (118 aa). [4Fe-4S] cluster contacts are provided by C13, C50, C84, C158, C162, and C165. One can recognise a Radical SAM core domain in the interval 144–376; it reads RKPKVTAFVS…QTLIRNNTTM (233 aa). The TRAM domain maps to 379–442; sequence QKMLGSIQSV…PNSLRGSYEK (64 aa).

This sequence belongs to the methylthiotransferase family. MiaB subfamily. As to quaternary structure, monomer. Requires [4Fe-4S] cluster as cofactor.

The protein resides in the cytoplasm. The enzyme catalyses N(6)-dimethylallyladenosine(37) in tRNA + (sulfur carrier)-SH + AH2 + 2 S-adenosyl-L-methionine = 2-methylsulfanyl-N(6)-dimethylallyladenosine(37) in tRNA + (sulfur carrier)-H + 5'-deoxyadenosine + L-methionine + A + S-adenosyl-L-homocysteine + 2 H(+). In terms of biological role, catalyzes the methylthiolation of N6-(dimethylallyl)adenosine (i(6)A), leading to the formation of 2-methylthio-N6-(dimethylallyl)adenosine (ms(2)i(6)A) at position 37 in tRNAs that read codons beginning with uridine. The sequence is that of tRNA-2-methylthio-N(6)-dimethylallyladenosine synthase from Buchnera aphidicola subsp. Baizongia pistaciae (strain Bp).